Reading from the N-terminus, the 187-residue chain is Phosphatidylethanolamine-binding protein 1 (187 aa).

Serine 13 is subject to Phosphoserine. Position 42 is a phosphothreonine (threonine 42). Residues serine 52, serine 98, and serine 153 each carry the phosphoserine modification. The segment at 93–134 (KGNDISSGTVLSDYVGSGPPKGTGLHRYVWLVYEQSGPLKCD) is interaction with RAF1.

Belongs to the phosphatidylethanolamine-binding protein family. In terms of assembly, has a tendency to form dimers by disulfide cross-linking. Interacts with RAF1 and this interaction is enhanced if RAF1 is phosphorylated on residues 'Ser-338', 'Ser-339', 'Tyr-340' and 'Tyr-341'. Interacts with ALOX15; in response to IL13/interleukin-13, prevents the interaction of PEBP1 with RAF1 to activate the ERK signaling cascade.

The protein resides in the cytoplasm. Its function is as follows. Binds ATP, opioids and phosphatidylethanolamine. Has lower affinity for phosphatidylinositol and phosphatidylcholine. Serine protease inhibitor which inhibits thrombin, neuropsin and chymotrypsin but not trypsin, tissue type plasminogen activator and elastase. Involved in the positive regulation of epithelial cell migration. Inhibits the kinase activity of RAF1 by inhibiting its activation and by dissociating the RAF1/MEK complex and acting as a competitive inhibitor of MEK phosphorylation. In terms of biological role, HCNP may be involved in the function of the presynaptic cholinergic neurons of the central nervous system. HCNP increases the production of choline acetyltransferase but not acetylcholinesterase. Seems to be mediated by a specific receptor. This Canis lupus familiaris (Dog) protein is Phosphatidylethanolamine-binding protein 1 (PEBP1).